The following is a 1337-amino-acid chain: Zinc finger protein 335 (1337 aa).

Disordered regions lie at residues M1 to S108 and G198 to P226. Low complexity-rich tracts occupy residues T31–V45 and S54–G63. The C2H2-type 1 zinc-finger motif lies at F248 to H271. The segment at A278–R444 is disordered. The segment covering D302–E332 has biased composition (acidic residues). Over residues R351–L362 the composition is skewed to basic residues. Positions P363–D372 are enriched in basic and acidic residues. A compositionally biased stretch (polar residues) spans L378–P388. 8 C2H2-type zinc fingers span residues Y466 to H488, F496 to H518, Y524 to H546, F563 to H585, H591 to H613, F622 to H644, F650 to H673, and F679 to H702. 2 disordered regions span residues L733–L767 and Q963–T999. Over residues P741–P756 the composition is skewed to pro residues. 2 positions are modified to phosphoserine: S976 and S1007. 4 C2H2-type zinc fingers span residues F1019–H1041, F1047–H1069, H1075–H1097, and F1103–H1126. K1022 is covalently cross-linked (Glycyl lysine isopeptide (Lys-Gly) (interchain with G-Cter in SUMO2)). Phosphoserine is present on S1149.

The protein belongs to the krueppel C2H2-type zinc-finger protein family. As to quaternary structure, interacts with NCOA6; may enhance ligand-dependent transcriptional activation by nuclear hormone receptors. Interacts with CNOT6. Interacts with CNOT9; the interaction is direct. Component of a nuclear receptor-mediated transcription complex composed of at least ZNF335, CCAR2 and EMSY; the complex stimulates the transcription of nuclear receptor target genes such as SOX9 and HOXA1. Within the complex interacts with EMSY and interacts (via C-terminus) with CCAR2. Interacts with members of histone H3'Lys4'(H3K4) methyltransferase complexes ASH2L, CXXC1, KMT2A/MLL1, RBBP5, SETD1A and WDR5. Component of a histone methylation complex composed of at least ZNF335, RBBP5, ASH2L and WDR5; the complex may have histone H3-specific methyltransferase activity, however does not have specificity for 'Lys-4' of histone H3. Interacts with RBBP5 and WDR5. Interacts with ASHL2. Components of this complex may associate with components of the ZNF335-CCAR2-EMSY nuclear receptor-mediated transcription complex to form a complex at least composed of ZNF335, HCFC1, CCAR2, EMSY, MKI67, RBBP5, ASH2L and WDR5. Within this complex also interacts with HCFC1 and MKI67. As to expression, expressed at low levels in cerebral cortex, hippocampus and cerebellum (at protein level).

The protein resides in the nucleus. Component or associated component of some histone methyltransferase complexes may regulate transcription through recruitment of those complexes on gene promoters. Enhances ligand-dependent transcriptional activation by nuclear hormone receptors. Plays an important role in neural progenitor cell proliferation and self-renewal through the regulation of specific genes involved brain development, including REST. Also controls the expression of genes involved in somatic development and regulates, for instance, lymphoblast proliferation. The polypeptide is Zinc finger protein 335 (Znf335) (Mus musculus (Mouse)).